The following is a 322-amino-acid chain: Delta-aminolevulinic acid dehydratase (322 aa).

Positions 120, 122, and 130 each coordinate Zn(2+). Lys195 (schiff-base intermediate with substrate) is an active-site residue. Residues Arg205 and Arg217 each contribute to the 5-aminolevulinate site. Glu233 lines the Mg(2+) pocket. The active-site Schiff-base intermediate with substrate is the Lys248. Residues Ser274 and Tyr312 each contribute to the 5-aminolevulinate site.

It belongs to the ALAD family. Homooctamer. Zn(2+) is required as a cofactor.

The enzyme catalyses 2 5-aminolevulinate = porphobilinogen + 2 H2O + H(+). It participates in porphyrin-containing compound metabolism; protoporphyrin-IX biosynthesis; coproporphyrinogen-III from 5-aminolevulinate: step 1/4. Catalyzes an early step in the biosynthesis of tetrapyrroles. Binds two molecules of 5-aminolevulinate per subunit, each at a distinct site, and catalyzes their condensation to form porphobilinogen. The sequence is that of Delta-aminolevulinic acid dehydratase (hemB) from Archaeoglobus fulgidus (strain ATCC 49558 / DSM 4304 / JCM 9628 / NBRC 100126 / VC-16).